The following is a 95-amino-acid chain: Acylphosphatase (95 aa).

The 86-residue stretch at 10-95 folds into the Acylphosphatase-like domain; the sequence is CIHVTVSGKV…VEDYSDFRVR (86 aa). Active-site residues include R25 and N43.

It belongs to the acylphosphatase family.

It catalyses the reaction an acyl phosphate + H2O = a carboxylate + phosphate + H(+). In Coxiella burnetii (strain RSA 493 / Nine Mile phase I), this protein is Acylphosphatase (acyP).